Reading from the N-terminus, the 616-residue chain is MATTQSETDCYDIIEVLGKGTFGEVAKGWRRSTGEMVAIKILKNDAYRNRIIKNELKLLHCMRGLDPEEAHVIRFLEFFHDALKFYLVFELLEQNLFEFQKENNFAPLPARHIRTVTLQVLRALARLKELAIIHADLKPENIMLVDQTRCPFRVKVIDFGSASIFSEVRYVKEPYIQSRFYRAPEILLGLPFCEKVDVWSLGCVMAELHLGWPLYPGNNEYDQVRYICETQGLPKPHLLHAARKAHHFFKRNPHPDAANPWQLKSSADYLAETKVRPLERRKYMLKSLDQIETVNGGSVASRLTFPDREALAEHADLKSMVELIKRMLTWESHERISPSAALRHPFVSMQQLRNAHETTHYYQLSLRSYRLSLQVEGKPPAPVVAAEDGTPYYRLAEEKEAAGMGSVASSSPFFREEKAPGMQRAIDQLDDLSLQEAGHGLWGETCTDVVSDMMAPLKAAITGRHMPDSGPEPILAFYSSRLAGRHKARKPPAGSKSDSNLSNLIRLSQVSPEDDRPCRGSSWEEGEHLGASAEPPAILQRDGDGPNIDNMTMEAERPDPELFDPSSCPGEWLSEPDWTLEGVRGPRAQGLPPRRSHQHGPPRGATSFLQHVTGHH.

The Protein kinase domain occupies Y11–V347. Residues L17–V25 and K40 each bind ATP. The active-site Proton acceptor is D136. The segment at R485–H616 is disordered. Polar residues predominate over residues K496–S511. S511 is modified (phosphoserine).

The protein belongs to the protein kinase superfamily. CMGC Ser/Thr protein kinase family. HIPK subfamily. Post-translationally, autophosphorylated.

The protein resides in the cytoplasm. It catalyses the reaction L-seryl-[protein] + ATP = O-phospho-L-seryl-[protein] + ADP + H(+). The enzyme catalyses L-threonyl-[protein] + ATP = O-phospho-L-threonyl-[protein] + ADP + H(+). Its function is as follows. Protein kinase that phosphorylates TP53, and thus induces TP53 repression of BIRC5 promoter. May act as a corepressor of transcription factors (Potential). The protein is Homeodomain-interacting protein kinase 4 (HIPK4) of Macaca fascicularis (Crab-eating macaque).